Here is a 631-residue protein sequence, read N- to C-terminus: Golgin subfamily A member 8A (631 aa).

Over residues 1–20 (MLPVDGEERKSEGSDTEGDR) the composition is skewed to basic and acidic residues. Disordered regions lie at residues 1–103 (MLPV…QEQA), 127–154 (KKQV…LEGQ), 426–447 (TSAE…ESSG), and 488–520 (PGDS…GAAG). Over residues 78 to 92 (SLYLSPKSSSASSSL) the composition is skewed to low complexity. Polar residues predominate over residues 93–103 (HARQSPCQEQA). Residues 110–468 (SIKISRLNDT…REHVEKLELG (359 aa)) adopt a coiled-coil conformation. The segment covering 128–152 (KQVEHQLEEEKKANNEKQKAERELE) has biased composition (basic and acidic residues). Residues 497-510 (PGGGHHQAGPGQGG) are compositionally biased toward gly residues. The interval 519-631 (AGDGVAACGS…CWAWLPRRRR (113 aa)) is golgi-targeting domain.

It belongs to the GOLGA8 family.

It is found in the golgi apparatus. The protein localises to the golgi stack membrane. Its function is as follows. May be involved in maintaining Golgi structure. This Homo sapiens (Human) protein is Golgin subfamily A member 8A (GOLGA8A).